We begin with the raw amino-acid sequence, 295 residues long: Septu protein PtuB (295 aa).

Component of antiviral defense system Septu type II, composed of PtuA and PtuB. Expression of Septu type II in B.subtilis (strain BEST7003) confers resistance to phages SBSphiC and SpBeta. May be a nuclease. The polypeptide is Septu protein PtuB (Bacillus mycoides (strain KBAB4) (Bacillus weihenstephanensis)).